The primary structure comprises 356 residues: Glutamine synthetase (356 aa).

Residues 19-99 (IIAEYIWIGG…VMCDCYTPRG (81 aa)) enclose the GS beta-grasp domain. One can recognise a GS catalytic domain in the interval 106-356 (KRYNAAKILS…IAQTTILWKP (251 aa)).

The protein belongs to the glutamine synthetase family. As to quaternary structure, homooctamer.

It is found in the cytoplasm. It catalyses the reaction L-glutamate + NH4(+) + ATP = L-glutamine + ADP + phosphate + H(+). This chain is Glutamine synthetase, found in Hordeum vulgare (Barley).